An 854-amino-acid polypeptide reads, in one-letter code: Protein mono-ADP-ribosyltransferase PARP9 (854 aa).

2 Macro domains span residues 107 to 296 (LQVF…EFIL) and 306 to 487 (TPSF…AKRS). One can recognise a PARP catalytic domain in the interval 628-850 (IQQQKTQDEM…QHPWRGFASG (223 aa)).

This sequence belongs to the ARTD/PARP family. As to quaternary structure, forms a stable complex with E3 ligase DTX3L; the interaction is required for PARP9 mediated ADP-ribosylation of ubiquitin. Interacts (via PARP catalytic domain) with DTX3L (via N-terminus). Forms a complex with STAT1 and DTX3L independently of IFNB1 or IFNG-mediated STAT1 'Tyr-701' phosphorylation. Forms a complex with STAT1, DTX3L and histone H2B H2BC9/H2BJ; the interaction is likely to induce H2BC9/H2BJ ubiquitination. Interacts (via N-terminus) with STAT1. Interacts with PARP14 in IFNG-stimulated macrophages; the interaction prevents PARP14-mediated STAT1 and STAT6 ADP-riboslylation. Interacts with PARP1 (when poly-ADP-ribosylated). ADP-ribosylated by PARP14. As to expression, expressed in lymphocyte-rich tissues, spleen, lymph nodes, peripheral blood lymphocytes and colonic mucosa. Expressed in macrophages. Also expressed in nonhematopoietic tissues such as heart and skeletal muscle. Isoform 2 is the predominant form. Most abundantly expressed in lymphomas with a brisk host inflammatory response. In diffuse large B-cell lymphomas tumors, expressed specifically by malignant B-cells.

It is found in the cytoplasm. It localises to the cytosol. The protein localises to the nucleus. It carries out the reaction [protein]-C-terminal glycine + NAD(+) = [protein]-C-terminal O-(ADP-D-ribosyl)-glycine + nicotinamide. With respect to regulation, binding to poly(ADP-ribose) does not affect its activity. Its function is as follows. ADP-ribosyltransferase which, in association with E3 ligase DTX3L, plays a role in DNA damage repair and in immune responses including interferon-mediated antiviral defenses. Within the complex, enhances DTX3L E3 ligase activity which is further enhanced by PARP9 binding to poly(ADP-ribose). In association with DTX3L and in presence of E1 and E2 enzymes, mediates NAD(+)-dependent mono-ADP-ribosylation of ubiquitin which prevents ubiquitin conjugation to substrates such as histones. During DNA repair, PARP1 recruits PARP9/BAL1-DTX3L complex to DNA damage sites via PARP9 binding to ribosylated PARP1. Subsequent PARP1-dependent PARP9/BAL1-DTX3L-mediated ubiquitination promotes the rapid and specific recruitment of 53BP1/TP53BP1, UIMC1/RAP80, and BRCA1 to DNA damage sites. In response to DNA damage, PARP9-DTX3L complex is required for efficient non-homologous end joining (NHEJ); the complex function is negatively modulated by PARP9 activity. Dispensable for B-cell receptor (BCR) assembly through V(D)J recombination and class switch recombination (CSR). In macrophages, positively regulates pro-inflammatory cytokines production in response to IFNG stimulation by suppressing PARP14-mediated STAT1 ADP-ribosylation and thus promoting STAT1 phosphorylation. Also suppresses PARP14-mediated STAT6 ADP-ribosylation. The chain is Protein mono-ADP-ribosyltransferase PARP9 (PARP9) from Homo sapiens (Human).